The primary structure comprises 870 residues: Leucine--tRNA ligase (870 aa).

Positions 42–52 (PYPSGKLHMGH) match the 'HIGH' region motif. Residues 629–633 (KMSKS) carry the 'KMSKS' region motif. Residue K632 participates in ATP binding.

Belongs to the class-I aminoacyl-tRNA synthetase family.

Its subcellular location is the cytoplasm. The enzyme catalyses tRNA(Leu) + L-leucine + ATP = L-leucyl-tRNA(Leu) + AMP + diphosphate. In Ectopseudomonas mendocina (strain ymp) (Pseudomonas mendocina), this protein is Leucine--tRNA ligase.